The primary structure comprises 132 residues: MQIKGHRICGGRATGPALVSKDAISFLGGVDPGTGTVIEKGHALYGKNVKGTVLIFPGGKGSTVGSYVIYQLMKNGVAPAAMINIKAEPIVAVGAIISGIPMVDRLEQNPVETIKDGDTVTVDGTAGIIELS.

Residue Ser62 is the Proton acceptor of the active site.

The protein belongs to the AcnX type II small subunit family. Heterodimer composed of a large subunit (PMDh-L) and a small subunit (PMDh-S).

It catalyses the reaction (R)-5-phosphomevalonate = (2E)-3-methyl-5-phosphooxypent-2-enoate + H2O. Its pathway is isoprenoid biosynthesis; isopentenyl diphosphate biosynthesis via mevalonate pathway. Component of a hydro-lyase that catalyzes the dehydration of mevalonate 5-phosphate (MVA5P) to form trans-anhydromevalonate 5-phosphate (tAHMP). Involved in the archaeal mevalonate (MVA) pathway, which provides fundamental precursors for isoprenoid biosynthesis, such as isopentenyl diphosphate (IPP) and dimethylallyl diphosphate (DMAPP). In Methanocella arvoryzae (strain DSM 22066 / NBRC 105507 / MRE50), this protein is Phosphomevalonate dehydratase small subunit.